Consider the following 1005-residue polypeptide: Ephrin type-A receptor 5 (1005 aa).

Residues 1–24 (MRGSGPRGAGRRRTQGRGGGGDTP) are disordered. The N-terminal stretch at 1 to 26 (MRGSGPRGAGRRRTQGRGGGGDTPRV) is a signal peptide. The Extracellular segment spans residues 27–575 (PASLAGCYSA…GASNDQSQIP (549 aa)). Residues 62–240 (EVNLLDSRTV…YYKKCPSVVR (179 aa)) form the Eph LBD domain. N-linked (GlcNAc...) asparagine glycosylation is found at Asn266, Asn301, Asn371, Asn425, Asn438, and Asn463. 2 Fibronectin type-III domains span residues 359-469 (PPSA…TNQA) and 470-564 (APSP…TTPV). The helical transmembrane segment at 576-596 (IIGVSVTVGVILLAVMIGFLL) threads the bilayer. Residues 597 to 1005 (SGSCCECGCG…MDAVAQVTLE (409 aa)) are Cytoplasmic-facing. Tyr652 and Tyr658 each carry phosphotyrosine; by autocatalysis. The 262-residue stretch at 677–938 (ITIERVIGAG…DIVNMLDKLI (262 aa)) folds into the Protein kinase domain. ATP is bound by residues 683–691 (IGAGEFGEV) and Lys709. Residue Asp802 is the Proton acceptor of the active site. A phosphotyrosine; by autocatalysis mark is found at Tyr835 and Tyr984. The 39-residue stretch at 967-1005 (GAYRSVGEWLEATKMGRYTEIFMENGYSSMDAVAQVTLE) folds into the SAM domain.

The protein belongs to the protein kinase superfamily. Tyr protein kinase family. Ephrin receptor subfamily. As to quaternary structure, heterotetramer upon binding of the ligand. The heterotetramer is composed of an ephrin dimer and a receptor dimer. Oligomerization is probably required to induce biological responses. Interacts (via SAM domain) with SAMD5 (via SAM domain). Post-translationally, phosphorylated. Phosphorylation is stimulated by the ligand EFNA5. Dephosphorylation upon stimulation by glucose, inhibits EPHA5 forward signaling and results in insulin secretion. As to expression, almost exclusively expressed in the nervous system. Predominantly expressed in neurons.

Its subcellular location is the cell membrane. It localises to the cell projection. The protein localises to the axon. The protein resides in the dendrite. The catalysed reaction is L-tyrosyl-[protein] + ATP = O-phospho-L-tyrosyl-[protein] + ADP + H(+). Its function is as follows. Receptor tyrosine kinase which binds promiscuously GPI-anchored ephrin-A family ligands residing on adjacent cells, leading to contact-dependent bidirectional signaling into neighboring cells. The signaling pathway downstream of the receptor is referred to as forward signaling while the signaling pathway downstream of the ephrin ligand is referred to as reverse signaling. Among GPI-anchored ephrin-A ligands, EFNA5 most probably constitutes the cognate/functional ligand for EPHA5. Functions as an axon guidance molecule during development and may be involved in the development of the retinotectal, entorhino-hippocampal and hippocamposeptal pathways. Together with EFNA5 plays also a role in synaptic plasticity in adult brain through regulation of synaptogenesis. In addition to its function in the nervous system, the interaction of EPHA5 with EFNA5 mediates communication between pancreatic islet cells to regulate glucose-stimulated insulin secretion. This is Ephrin type-A receptor 5 (Epha5) from Rattus norvegicus (Rat).